The following is a 584-amino-acid chain: Endoribonuclease YBEY, chloroplastic (584 aa).

The N-terminal 50 residues, 1–50 (MLSRVCPTLRYNRIWSAHAREMPRATLLLLQPNFFHSSPKTALVNRLDVT), are a transit peptide targeting the chloroplast. Residues His-240, His-244, and His-250 each contribute to the Zn(2+) site.

It belongs to the endoribonuclease YbeY family. It depends on Zn(2+) as a cofactor.

Its subcellular location is the plastid. The protein resides in the chloroplast stroma. Its function is as follows. Endoribonuclease required for chloroplast ribosomal RNA (rRNA) processing and essential for normal growth and development. May be involved in maturation of both the 5' and 3' ends of 16S, 23S, and 4.5S rRNAs. Cleaves chloroplast rRNAs, mRNAs and tRNAs in vitro. This is Endoribonuclease YBEY, chloroplastic from Arabidopsis thaliana (Mouse-ear cress).